Reading from the N-terminus, the 415-residue chain is Glutamyl-tRNA reductase (415 aa).

Residues T49–R52, S104, E109–Q111, and Q115 contribute to the substrate site. Residue C50 is the Nucleophile of the active site. Residue G184–I189 participates in NADP(+) binding.

It belongs to the glutamyl-tRNA reductase family. Homodimer.

It catalyses the reaction (S)-4-amino-5-oxopentanoate + tRNA(Glu) + NADP(+) = L-glutamyl-tRNA(Glu) + NADPH + H(+). Its pathway is porphyrin-containing compound metabolism; protoporphyrin-IX biosynthesis; 5-aminolevulinate from L-glutamyl-tRNA(Glu): step 1/2. Its function is as follows. Catalyzes the NADPH-dependent reduction of glutamyl-tRNA(Glu) to glutamate 1-semialdehyde (GSA). The chain is Glutamyl-tRNA reductase from Neisseria gonorrhoeae (strain ATCC 700825 / FA 1090).